The sequence spans 5635 residues: Hemicentin-1 (5635 aa).

The first 21 residues, 1-21, serve as a signal peptide directing secretion; that stretch reads MISWEVVHTVFLFALLYSSLA. The 176-residue stretch at 41 to 216 folds into the VWFA domain; the sequence is TLAFVFDVTG…EVLKWVEEAV (176 aa). 2 N-linked (GlcNAc...) asparagine glycosylation sites follow: Asn-349 and Asn-390. 44 consecutive Ig-like C2-type domains span residues 431 to 517, 520 to 607, 612 to 697, 702 to 788, 793 to 883, 890 to 976, 981 to 1067, 1072 to 1166, 1171 to 1255, 1262 to 1354, 1358 to 1447, 1452 to 1541, 1546 to 1634, 1638 to 1724, 1733 to 1821, 1826 to 1914, 1919 to 2007, 2012 to 2097, 2104 to 2190, 2195 to 2285, 2290 to 2379, 2384 to 2470, 2478 to 2564, 2571 to 2662, 2666 to 2763, 2766 to 2864, 2868 to 2959, 2964 to 3051, 3056 to 3146, 3151 to 3240, 3245 to 3335, 3340 to 3429, 3434 to 3516, 3527 to 3615, 3620 to 3708, 3713 to 3797, 3804 to 3892, 3897 to 3983, 3988 to 4076, 4079 to 4164, 4169 to 4255, 4260 to 4344, 4348 to 4435, and 4440 to 4527; these read PKVT…FDVS, PPVI…VFLT, PKVT…STLR, PKLM…ITLD, PVFI…TTVT, PLIG…TSVV, PTIQ…VQLT, PRVF…VKLN, PKIQ…TEIT, PTVE…YNLK, PPVI…FNID, PTII…IKLT, PSIK…FHVD, PPMI…KEIK, PAIE…FEVT, PTIK…IQLH, PSLE…YSLQ, PSIS…RDID, PNIM…YNVN, PNIG…YNLQ, PTIT…YDLS, PSII…RKIF, PHIV…RSFS, PTIA…YEVK, PPII…VNIQ, PSFQ…YDVR, PPII…FNLN, PSVI…FSLT, PSIK…FHLN, PSIE…YFLS, PSVA…FNLN, PTIR…YNLQ, PNMD…GEVS, PHIN…YLVR, PNIA…FILT, PNIK…RRID, PSIA…VDLT, PSIA…VTLH, PVIQ…LNVQ, PVIS…TKLT, PRIR…VSLT, PTFT…GFVY, PPVF…MSLT, and PIIT…VIVQ. Cys-451 and Cys-499 form a disulfide bridge. N-linked (GlcNAc...) asparagine glycosylation is found at Asn-528, Asn-550, Asn-573, and Asn-620. Cys-541 and Cys-591 are oxidised to a cystine. A disulfide bond links Cys-633 and Cys-681. Asn-693 is a glycosylation site (N-linked (GlcNAc...) asparagine). A disulfide bridge connects residues Cys-723 and Cys-772. The N-linked (GlcNAc...) asparagine glycan is linked to Asn-809. Cystine bridges form between Cys-814–Cys-867 and Cys-911–Cys-960. A glycan (N-linked (GlcNAc...) asparagine) is linked at Asn-970. Disulfide bonds link Cys-1002/Cys-1051 and Cys-1101/Cys-1150. Asn-1158 is a glycosylation site (N-linked (GlcNAc...) asparagine). An intrachain disulfide couples Cys-1192 to Cys-1241. A glycan (N-linked (GlcNAc...) asparagine) is linked at Asn-1272. A disulfide bridge links Cys-1288 with Cys-1338. Asn-1369 carries N-linked (GlcNAc...) asparagine glycosylation. 2 disulfide bridges follow: Cys-1382–Cys-1431 and Cys-1475–Cys-1525. The N-linked (GlcNAc...) asparagine glycan is linked to Asn-1552. 4 disulfides stabilise this stretch: Cys-1569–Cys-1618, Cys-1663–Cys-1712, Cys-1756–Cys-1805, and Cys-1848–Cys-1898. Asn-1929 is a glycosylation site (N-linked (GlcNAc...) asparagine). 2 cysteine pairs are disulfide-bonded: Cys-1942–Cys-1991 and Cys-2033–Cys-2083. N-linked (GlcNAc...) asparagine glycosylation is found at Asn-2112 and Asn-2155. 3 cysteine pairs are disulfide-bonded: Cys-2125–Cys-2174, Cys-2218–Cys-2269, and Cys-2314–Cys-2363. A glycan (N-linked (GlcNAc...) asparagine) is linked at Asn-2395. Cystine bridges form between Cys-2408/Cys-2457, Cys-2501/Cys-2550, and Cys-2597/Cys-2646. N-linked (GlcNAc...) asparagine glycosylation occurs at Asn-2689. 2 disulfide bridges follow: Cys-2696–Cys-2745 and Cys-2799–Cys-2848. Residue Asn-2887 is glycosylated (N-linked (GlcNAc...) asparagine). Cysteines 2894 and 2943 form a disulfide. A glycan (N-linked (GlcNAc...) asparagine) is linked at Asn-2973. 6 cysteine pairs are disulfide-bonded: Cys-2986–Cys-3035, Cys-3081–Cys-3130, Cys-3173–Cys-3224, Cys-3268–Cys-3319, Cys-3364–Cys-3413, and Cys-3457–Cys-3506. N-linked (GlcNAc...) asparagine glycosylation is found at Asn-3221 and Asn-3300. N-linked (GlcNAc...) asparagine glycosylation is present at Asn-3530. 2 disulfides stabilise this stretch: Cys-3550-Cys-3599 and Cys-3643-Cys-3692. Asn-3689 and Asn-3727 each carry an N-linked (GlcNAc...) asparagine glycan. A disulfide bond links Cys-3734 and Cys-3783. N-linked (GlcNAc...) asparagine glycosylation is present at Asn-3812. Cystine bridges form between Cys-3825-Cys-3876, Cys-3918-Cys-3967, Cys-4009-Cys-4058, Cys-4100-Cys-4148, Cys-4190-Cys-4239, Cys-4281-Cys-4328, Cys-4371-Cys-4419, Cys-4461-Cys-4509, Cys-4541-Cys-4578, Cys-4545-Cys-4583, Cys-4556-Cys-4568, Cys-4598-Cys-4635, Cys-4602-Cys-4640, Cys-4613-Cys-4625, Cys-4655-Cys-4692, Cys-4659-Cys-4697, Cys-4670-Cys-4682, Cys-4712-Cys-4749, Cys-4716-Cys-4754, Cys-4727-Cys-4739, Cys-4769-Cys-4806, Cys-4773-Cys-4811, Cys-4784-Cys-4796, Cys-4826-Cys-4863, Cys-4830-Cys-4868, and Cys-4841-Cys-4853. Asn-4029 carries N-linked (GlcNAc...) asparagine glycosylation. N-linked (GlcNAc...) asparagine glycans are attached at residues Asn-4401 and Asn-4491. TSP type-1 domains are found at residues 4529 to 4584, 4586 to 4641, 4643 to 4698, 4700 to 4755, 4757 to 4812, and 4814 to 4869; these read HGGF…KPCP, DGSW…RPCP, HGAW…RNCP, HGKW…DPCP, HGNW…DMCP, and DGSW…QACP. Asn-4606 is a glycosylation site (N-linked (GlcNAc...) asparagine). Positions 4871–5093 constitute a Nidogen G2 beta-barrel domain; that stretch reads GPQRARGSVI…SKGDRSNQCP (223 aa). 2 N-linked (GlcNAc...) asparagine glycosylation sites follow: Asn-4894 and Asn-5040. Positions 5107–5146 constitute an EGF-like 1; calcium-binding domain; sequence DEDECAAGNPCSHSCHNAMGTYYCSCPKGLTIAADGRTCQ. 3 disulfides stabilise this stretch: Cys-5111–Cys-5121, Cys-5117–Cys-5130, and Cys-5132–Cys-5145. In terms of domain architecture, EGF-like 2; calcium-binding spans 5147-5191; sequence DIDECALGRHTCHAGQDCDNTIGSYRCVVRCGSGFRRTSDGLSCQ. One can recognise an EGF-like 3; calcium-binding domain in the interval 5192-5229; it reads DINECQESSPCHQRCFNAIGSFHCGCEPGYQLKGRKCM. Cystine bridges form between Cys-5196-Cys-5206, Cys-5202-Cys-5215, and Cys-5217-Cys-5228. Residues 5230 to 5271 form the EGF-like 4; calcium-binding domain; that stretch reads DVNECRQNVCRPDQHCKNTRGGYKCIDLCPNGMTKAENGTCI. An N-linked (GlcNAc...) asparagine glycan is attached at Asn-5267. The region spanning 5272–5307 is the EGF-like 5; calcium-binding domain; the sequence is DIDECKDGTHQCRYNQICENTRGSYRCVCPRGYRSQ. 8 disulfides stabilise this stretch: Cys-5276–Cys-5289, Cys-5283–Cys-5298, Cys-5319–Cys-5330, Cys-5326–Cys-5339, Cys-5341–Cys-5354, Cys-5436–Cys-5446, Cys-5442–Cys-5455, and Cys-5457–Cys-5470. One can recognise an EGF-like 6; calcium-binding domain in the interval 5315 to 5355; it reads DINECEQVPKPCAHQCSNTPGSFKCICPPGQHLLGDGKSCA. The 40-residue stretch at 5432–5471 folds into the EGF-like 7; calcium-binding domain; it reads DIDECENTDACQHECKNTFGSYQCICPPGYQLTHNGKTCQ. Asn-5615 is a glycosylation site (N-linked (GlcNAc...) asparagine).

As to expression, expressed in hair follicles and in the dermis (at protein level). Expressed in skin fibroblasts and retinal pigment epithelium (RPE) cells.

It is found in the secreted. Its subcellular location is the extracellular space. The protein localises to the extracellular matrix. The protein resides in the basement membrane. It localises to the cytoplasm. It is found in the cell junction. Its subcellular location is the cleavage furrow. Functionally, involved in transforming growth factor beta-mediated rearrangement of the podocyte cytoskeleton which includes reduction of F-actin fibers and broadening, flattening and elongation of podocytes. Plays a role in basement membrane organization. May promote cleavage furrow maturation during cytokinesis in preimplantation embryos. May play a role in the architecture of adhesive and flexible epithelial cell junctions. May play a role during myocardial remodeling by imparting an effect on cardiac fibroblast migration. The chain is Hemicentin-1 (HMCN1) from Homo sapiens (Human).